A 202-amino-acid chain; its full sequence is Syndecan-4 (202 aa).

The first 23 residues, 1-23, serve as a signal peptide directing secretion; that stretch reads MAPVCLFAPLLLLLLGGFPVAPG. Residues 24 to 149 lie on the Extracellular side of the membrane; it reads ESIRETEVID…QGSNIFERTE (126 aa). Disordered stretches follow at residues 42-76 and 89-138; these read YFSG…TEEP and LDNH…MSST. Serine 44 carries an O-linked (Xyl...) (glycosaminoglycan) serine glycan. The segment covering 48–62 has biased composition (acidic residues); that stretch reads PDDEDAGGLEQDSDF. O-linked (Xyl...) (glycosaminoglycan) serine glycosylation is found at serine 65 and serine 67. Residues 105–121 show a composition bias toward basic and acidic residues; it reads SEPKELEENEVIPKRVP. Residues 150-174 traverse the membrane as a helical segment; the sequence is VLAALIVGGVVGILFAVFLILLLVY. The Cytoplasmic segment spans residues 175–202; that stretch reads RMKKKDEGSYDLGKKPIYKKAPTNEFYA.

The protein belongs to the syndecan proteoglycan family. In terms of assembly, homodimer. Interacts with CDCP1 and SDCBP. Interacts (via its cytoplasmic domain) with GIPC (via its PDZ domain). Interacts (via its cytoplasmic domain) with NUDT16L1. Interacts with DNM2; this interaction is markedly enhanced at focal ahesion site upon induction of focal adhesions and stress-fiber formation. Post-translationally, shedding is enhanced by a number of factors such as heparanase, thrombin or EGF. Also by stress and wound healing. PMA-mediated shedding is inhibited by TIMP3. In terms of processing, O-glycosylated; contains both chondroitin sulfate and heparan sulfate. Ser-44, Ser-65 and Ser-67 can all be modified by either chondroitin sulfate or heparan sulfate, and the protein exists in forms that contain only chondroitin sulfate, only heparan sulfate and both chondroitin sulfate and heparan sulfate.

It is found in the membrane. The protein resides in the secreted. Functionally, cell surface proteoglycan which regulates exosome biogenesis in concert with SDCBP and PDCD6IP. In Rattus norvegicus (Rat), this protein is Syndecan-4.